The chain runs to 139 residues: Transcription antitermination protein NusB (139 aa).

This sequence belongs to the NusB family.

Its function is as follows. Involved in transcription antitermination. Required for transcription of ribosomal RNA (rRNA) genes. Binds specifically to the boxA antiterminator sequence of the ribosomal RNA (rrn) operons. The chain is Transcription antitermination protein NusB from Lactiplantibacillus plantarum (strain ATCC BAA-793 / NCIMB 8826 / WCFS1) (Lactobacillus plantarum).